The primary structure comprises 152 residues: Ribonuclease pancreatic beta-type (152 aa).

The first 25 residues, 1–25 (MGLEKSFILFSLLVLVLGWVQPSLG), serve as a signal peptide directing secretion. The segment covering 31 to 45 (SSADKFKRQHMDPES) has biased composition (basic and acidic residues). Positions 31–53 (SSADKFKRQHMDPESPSKSSPTY) are disordered. Residues Lys35 and Arg38 each coordinate substrate. The Proton acceptor role is filled by His40. Intrachain disulfides connect Cys54-Cys112, Cys68-Cys123, Cys86-Cys138, and Cys93-Cys100. Substrate-binding positions include 69–73 (KPVNT), Lys94, and Arg113. His147 functions as the Proton donor in the catalytic mechanism.

It belongs to the pancreatic ribonuclease family. As to quaternary structure, monomer.

It localises to the secreted. It catalyses the reaction an [RNA] containing cytidine + H2O = an [RNA]-3'-cytidine-3'-phosphate + a 5'-hydroxy-ribonucleotide-3'-[RNA].. It carries out the reaction an [RNA] containing uridine + H2O = an [RNA]-3'-uridine-3'-phosphate + a 5'-hydroxy-ribonucleotide-3'-[RNA].. Functionally, endonuclease that catalyzes the cleavage of RNA on the 3' side of pyrimidine nucleotides. Acts on single-stranded and double-stranded RNA. The chain is Ribonuclease pancreatic beta-type from Rattus exulans (Polynesian rat).